We begin with the raw amino-acid sequence, 365 residues long: Glucan endo-1,3-beta-glucosidase, basic vacuolar isoform (365 aa).

Positions 1-32 (MSTLHKHNTPQMAAITLLGLLLVASSIEIAGA) are cleaved as a signal peptide. Glutamate 128 serves as the catalytic Proton donor. Residue glutamate 273 is the Nucleophile of the active site. Positions 349–365 (VSGSVETNATASLISEI) are cleaved as a propeptide — removed in mature form. Asparagine 356 is a glycosylation site (N-linked (GlcNAc...) asparagine).

It belongs to the glycosyl hydrolase 17 family.

Its subcellular location is the vacuole. It catalyses the reaction Hydrolysis of (1-&gt;3)-beta-D-glucosidic linkages in (1-&gt;3)-beta-D-glucans.. Functionally, implicated in the defense of plants against pathogens. This Nicotiana plumbaginifolia (Leadwort-leaved tobacco) protein is Glucan endo-1,3-beta-glucosidase, basic vacuolar isoform (GN2).